Consider the following 150-residue polypeptide: MLYHLFVNNQIKLQDDFKAEAVATIRSSVFNSKGGTTVFNFLSAGENILLHISIRPGENAIVFNSRTKGGAWGPEERVPYAGKFKGPNPSITVLDHGDRFQILFDNATAIYYTKRIKENAAAIAYSAENSLFSSPVTVDIHGLLPPLPPA.

The Galectin domain occupies 9 to 141 (NQIKLQDDFK…FSSPVTVDIH (133 aa)). Positions 51, 55, 64, and 75 each coordinate a carbohydrate.

In terms of assembly, homotetramer. Oligomerization is required for carbohydrate binding. Most abundant in fruiting bodies. Very low levels of expression in asexual vegetative mycelia.

The protein resides in the secreted. It localises to the extracellular space. The protein localises to the extracellular matrix. It is found in the cell wall. Its subcellular location is the endomembrane system. Its function is as follows. Binds lactose. May play a role in fruiting body formation. The protein is Galectin-1 (Cgl1) of Coprinopsis cinerea (strain Okayama-7 / 130 / ATCC MYA-4618 / FGSC 9003) (Inky cap fungus).